Here is a 61-residue protein sequence, read N- to C-terminus: Small ribosomal subunit protein uS14 (61 aa).

C24, C27, C40, and C43 together coordinate Zn(2+).

This sequence belongs to the universal ribosomal protein uS14 family. Zinc-binding uS14 subfamily. As to quaternary structure, part of the 30S ribosomal subunit. Contacts proteins S3 and S10. It depends on Zn(2+) as a cofactor.

In terms of biological role, binds 16S rRNA, required for the assembly of 30S particles and may also be responsible for determining the conformation of the 16S rRNA at the A site. This chain is Small ribosomal subunit protein uS14, found in Thermodesulfovibrio yellowstonii (strain ATCC 51303 / DSM 11347 / YP87).